Consider the following 218-residue polypeptide: ATP-dependent dethiobiotin synthetase BioD (218 aa).

Residue 9 to 15 coordinates ATP; the sequence is TNAGKTT. T14 lines the Mg(2+) pocket. The active site involves K35. Position 35 (K35) interacts with phosphate. T39 is a substrate binding site. ATP-binding positions include D50, E116, and 116-119; that span reads EGAG. Mg(2+) is bound by residues D50 and E116. 116 to 119 lines the phosphate pocket; sequence EGAG. 151–154 lines the substrate pocket; it reads GLIN. Residues N175 and 175-177 contribute to the ATP site; that span reads NLK.

This sequence belongs to the dethiobiotin synthetase family. As to quaternary structure, homodimer. The cofactor is Mg(2+).

The protein resides in the cytoplasm. The catalysed reaction is (7R,8S)-7,8-diammoniononanoate + CO2 + ATP = (4R,5S)-dethiobiotin + ADP + phosphate + 3 H(+). It functions in the pathway cofactor biosynthesis; biotin biosynthesis; biotin from 7,8-diaminononanoate: step 1/2. Functionally, catalyzes a mechanistically unusual reaction, the ATP-dependent insertion of CO2 between the N7 and N8 nitrogen atoms of 7,8-diaminopelargonic acid (DAPA, also called 7,8-diammoniononanoate) to form a ureido ring. This chain is ATP-dependent dethiobiotin synthetase BioD, found in Helicobacter pylori (strain ATCC 700392 / 26695) (Campylobacter pylori).